A 65-amino-acid polypeptide reads, in one-letter code: Large ribosomal subunit protein bL35 (65 aa).

The segment at 1 to 26 (MPKMKTHRGAAKRFRKTGTGKLKRGK) is disordered.

It belongs to the bacterial ribosomal protein bL35 family.

The polypeptide is Large ribosomal subunit protein bL35 (Clostridium beijerinckii (strain ATCC 51743 / NCIMB 8052) (Clostridium acetobutylicum)).